The chain runs to 620 residues: 1-deoxy-D-xylulose-5-phosphate synthase (620 aa).

Thiamine diphosphate contacts are provided by residues H80 and 121-123 (GHS). D152 contributes to the Mg(2+) binding site. Thiamine diphosphate is bound by residues 153-154 (GA), N181, Y288, and E370. N181 contributes to the Mg(2+) binding site.

This sequence belongs to the transketolase family. DXPS subfamily. Homodimer. The cofactor is Mg(2+). Requires thiamine diphosphate as cofactor.

It catalyses the reaction D-glyceraldehyde 3-phosphate + pyruvate + H(+) = 1-deoxy-D-xylulose 5-phosphate + CO2. It functions in the pathway metabolic intermediate biosynthesis; 1-deoxy-D-xylulose 5-phosphate biosynthesis; 1-deoxy-D-xylulose 5-phosphate from D-glyceraldehyde 3-phosphate and pyruvate: step 1/1. Functionally, catalyzes the acyloin condensation reaction between C atoms 2 and 3 of pyruvate and glyceraldehyde 3-phosphate to yield 1-deoxy-D-xylulose-5-phosphate (DXP). The polypeptide is 1-deoxy-D-xylulose-5-phosphate synthase (Escherichia coli (strain 55989 / EAEC)).